The chain runs to 272 residues: HTH-type transcriptional repressor AllR (272 aa).

The segment at 1-20 is disordered; sequence MTEVRRRGRPGQAEPTAQKG. One can recognise an HTH iclR-type domain in the interval 21-83; that stretch reads AQALERGIAI…SQLGWWHIGL (63 aa). Positions 43–62 form a DNA-binding region, H-T-H motif; it reads VSDISGSLDLPLSTTFRLLK. The region spanning 98–267 is the IclR-ED domain; sequence VLSVAGPFMH…AKDISTALGL (170 aa). Glyoxylate-binding positions include 154–156, D207, C217, and 234–236; these read SGA and SIS.

Its function is as follows. Negative regulator of allantoin and glyoxylate utilization operons. Binds to the gcl promoter and to the allS-allA intergenic region. In Salmonella typhi, this protein is HTH-type transcriptional repressor AllR (allR).